A 1582-amino-acid polypeptide reads, in one-letter code: SET-binding protein (1582 aa).

Disordered stretches follow at residues 1-76 (MEPR…WVAG), 124-246 (ITIK…KVPA), 278-416 (LLGS…KRQS), and 446-513 (SNSE…KLSE). Over residues 18–27 (EFLQGSSSRS) the composition is skewed to polar residues. Over residues 57–74 (GSGRDVDCNSNADSEKWV) the composition is skewed to basic and acidic residues. 2 stretches are compositionally biased toward polar residues: residues 126–141 (IKQS…GKNS) and 213–229 (MEWS…QNCF). Residues 278-298 (LLGSVVPSPSSHNSPATPSSS) are compositionally biased toward low complexity. A compositionally biased stretch (basic and acidic residues) spans 356-365 (ETTEGKREAY). Polar residues predominate over residues 368-388 (DSAQEASPARQSISSVSNPEN). Residues 450-465 (GSKKDPRVPKLGKMIE) show a composition bias toward basic and acidic residues. A DNA-binding region (a.T hook 1) is located at residues 575–587 (KKKRGRPKKQPLL). Disordered regions lie at residues 595 to 617 (GTST…RKRR) and 709 to 787 (RGTI…ASTE). A compositionally biased stretch (polar residues) spans 770–787 (LSTQLGGSNGNLSPASTE). Lys-808 carries the N6-acetyllysine modification. Residues 845–871 (SPVSESHSEETIPSDSGIGTDNNSTSD) show a composition bias toward polar residues. The disordered stretch occupies residues 845 to 880 (SPVSESHSEETIPSDSGIGTDNNSTSDQAEKSSESR). The segment at residues 1007–1019 (KKKRGRPAKTNDT) is a DNA-binding region (a.T hook 2). 6 disordered regions span residues 1128-1155 (VGGA…DRIL), 1182-1215 (SGSD…VSKN), 1236-1265 (AKDK…TRSE), 1429-1461 (QRQS…RDQM), 1470-1489 (LPSK…EPAS), and 1507-1582 (EAPP…DVLP). Residues 1137 to 1150 (RLHKRKHKHKRKHK) are compositionally biased toward basic residues. Residues 1182–1196 (SGSDKELPLVSEKSK) show a composition bias toward basic and acidic residues. Positions 1439 to 1448 (VKKRRGRPRK) are enriched in basic residues. Residues 1440–1452 (KKRRGRPRKQPSQ) constitute a DNA-binding region (a.T hook 3). Pro residues-rich tracts occupy residues 1509–1533 (PPLP…PPLP) and 1546–1559 (QPPA…PQPL).

In terms of assembly, interacts with SET.

It localises to the nucleus. The sequence is that of SET-binding protein (Setbp1) from Mus musculus (Mouse).